A 2027-amino-acid chain; its full sequence is Dedicator of cytokinesis protein 3 (2027 aa).

The SH3 domain maps to 6–67; that stretch reads EEEKYGVVIC…PANYIHLKKA (62 aa). Positions 421 to 598 constitute a C2 DOCK-type domain; sequence RNDLYLTLEK…ESFFISTQLS (178 aa). One can recognise a DOCKER domain in the interval 1225-1632; that stretch reads KSEINKEEMY…LYHEFPGLDK (408 aa). Position 1655 is a phosphoserine (Ser1655). Disordered regions lie at residues 1672 to 1695, 1731 to 1768, 1846 to 1925, and 1971 to 2027; these read GTGR…MMMM, SSSQ…SLPD, DTPP…DEGL, and PPKP…RGEQ. 2 stretches are compositionally biased toward low complexity: residues 1676-1695 and 1731-1751; these read HSSS…MMMM and SSSQ…APSQ. A compositionally biased stretch (polar residues) spans 1752–1763; sequence MITSAPSSTRGS. Positions 1877–1899 are enriched in low complexity; it reads GSNSTLSGSASSGVSSLSESNFG. An SH3-binding motif is present at residues 1967–1973; the sequence is PPALPPK. Composition is skewed to basic and acidic residues over residues 1981-1998 and 2011-2027; these read ALEH…ERPR and VKEE…RGEQ.

The protein belongs to the DOCK family. As to quaternary structure, interacts with presenilin proteins PSEN1 and PSEN2. Interacts with CRK. In terms of tissue distribution, expressed in brain, spinal cord, pituitary gland, testis. Not expressed in heart, liver, kidney, spleen and lung. In brain, it is highly expressed in the cerebral cortex and hippocampus, while it is absent in other tissues, except in spinal cord. In the cerebral cortex, it is found within the intermediate (III and IV) and deep (V and VI) layers, whereas it is weakly expressed in superficial layer I. It is also abundant in the piriform cortex. Within the hippocampus, it is expressed in the pyramidal neurons of the CA1, CA2, and CA3 regions and the dentate gyrus.

The protein localises to the cytoplasm. Functionally, potential guanine nucleotide exchange factor (GEF). GEF proteins activate some small GTPases by exchanging bound GDP for free GTP. Its interaction with presenilin proteins as well as its ability to stimulate Tau/MAPT phosphorylation suggest that it may be involved in Alzheimer disease. Ectopic expression in nerve cells decreases the secretion of amyloid-beta APBA1 protein and lowers the rate of cell-substratum adhesion, suggesting that it may affect the function of some small GTPase involved in the regulation of actin cytoskeleton or cell adhesion receptors. This is Dedicator of cytokinesis protein 3 (Dock3) from Mus musculus (Mouse).